Reading from the N-terminus, the 187-residue chain is MNLQHHFLIAMPALQDPIFRRSVVYICEHNQDGAMGIIVNKPLENLQIEGILEKLKITPEPRDSSIRLDKAVMLGGPLAEDRGFILHTPPSRFASSIRISDNTVITTSRDVLETLGTQQQPSDVLVALGYASWDKGQLEQELLDNAWLTAPADLNILFKTPIAERWREAAKLIGIDILTMPGVAGHA.

It belongs to the UPF0301 (AlgH) family.

This is UPF0301 protein YqgE from Salmonella agona (strain SL483).